The following is a 307-amino-acid chain: Bidirectional sugar transporter SWEET11 (307 aa).

Residues 1 to 14 (MAGGFLSMANPAVT) lie on the Extracellular side of the membrane. The chain crosses the membrane as a helical span at residues 15-35 (LSGVAGNIISFLVFLAPVATF). One can recognise a MtN3/slv 1 domain in the interval 17 to 100 (GVAGNIISFL…VLYLVYAPRR (84 aa)). Topologically, residues 36–47 (LQVYKKKSTGGY) are cytoplasmic. The helical transmembrane segment at 48-68 (SSVPYVVALFSSVLWIFYALV) threads the bilayer. The Extracellular segment spans residues 69-74 (KTNSRP). Residues 75-95 (LLTINAFGCGVEAAYIVLYLV) traverse the membrane as a helical segment. At 96–107 (YAPRRARLRTLA) the chain is on the cytoplasmic side. A helical membrane pass occupies residues 108–128 (FFLLLDVAAFALIVVTTLYLV). The Extracellular portion of the chain corresponds to 129–135 (PKPHQVK). Residues 136 to 156 (FLGSVCLAFSMAVFVAPLSII) traverse the membrane as a helical segment. In terms of domain architecture, MtN3/slv 2 spans 136-219 (FLGSVCLAFS…MGLYFWYRKP (84 aa)). The Cytoplasmic portion of the chain corresponds to 157–168 (FKVIKTKSVEFM). The chain crosses the membrane as a helical span at residues 169-189 (PIGLSVCLTLSAVAWFCYGLF). The Extracellular portion of the chain corresponds to 190-194 (TKDPY). The helical transmembrane segment at 195–215 (VMYPNVGGFFFSCVQMGLYFW) threads the bilayer. At 216–307 (YRKPRNTAVL…PEVIEITAAV (92 aa)) the chain is on the cytoplasmic side.

The protein belongs to the SWEET sugar transporter family. In terms of assembly, interacts with COPT1 and COPT2. Interacts with APX8. Mostly expressed in panicles and anthers. Also detected in leaves (leaf collar, leaf auricle, leaf ligule), roots, sheaths, culms and culm nodes.

The protein localises to the cell membrane. Functionally, mediates both low-affinity uptake and efflux of sugar across the plasma membrane. Required for pollen viability. Involved in the transport of copper, in cooperation with COPT1 and COPT2. Its function is as follows. Confers sensitivity to bacterial blight mediated by X.oryzae pv. oryzae (Xoo) in its Xa13 allelic form (e.g. cv. IR24), probably by providing the sugar required for the pathogen growth, or by reducing copper contents in xylem. However, a recessive resistance can be associated with the xa13 allele (in which the promoter is mutated leading to reduced induction upon pathogen infection, e.g. cv. IRBB13), specifically toward Xoo Philippine race 6 and Indian race PXO8. This is Bidirectional sugar transporter SWEET11 (SWEET11) from Oryza sativa subsp. japonica (Rice).